Here is a 155-residue protein sequence, read N- to C-terminus: MPHPLLPELETLATSVAADQGFELCGIQLLTHLAPMTLEVHIRRSNGVDVNMDDCAGFSGTLGEALESAQLLTEAYVLEISSPGIGETLSSDRDFQTFRGFPVEVVHRDRDDTEQRLEGLLLERDEDTLQINIRGRIKRLPRDHVLSVRLTSPGS.

It belongs to the RimP family.

It localises to the cytoplasm. Its function is as follows. Required for maturation of 30S ribosomal subunits. The chain is Ribosome maturation factor RimP from Parasynechococcus marenigrum (strain WH8102).